A 329-amino-acid chain; its full sequence is (12E)-labda-8(17),12,14-triene synthase (329 aa).

Residues aspartate 90 and glutamate 95 each coordinate Mg(2+). The short motif at 90 to 95 (DDMHGE) is the DDXXXE motif element. Arginine 184 is a binding site for substrate. Mg(2+) contacts are provided by asparagine 230 and serine 234. The short motif at 230–238 (NDLASYERE) is the NXXXSXXXE motif element. A substrate-binding site is contributed by arginine 237. A Mg(2+)-binding site is contributed by glutamate 238. 316 to 317 (RY) contributes to the substrate binding site.

This sequence belongs to the terpene synthase family. Mg(2+) serves as cofactor.

The catalysed reaction is (+)-copalyl diphosphate = (12E)-labda-8(17),12,14-triene + diphosphate. In terms of biological role, involved in the biosynthesis of the mercapturic acid derivative diterpene cyslabdan A, a potentiator of the beta-lactam antibiotic imipenem. Catalyzes the conversion of (+)-copalyl diphosphate to yield labda-8(17),12(E),14-triene (biformene). In Streptomyces cyslabdanicus, this protein is (12E)-labda-8(17),12,14-triene synthase.